Reading from the N-terminus, the 147-residue chain is Protein archease (147 aa).

Ca(2+)-binding residues include D17, D146, and I147.

The protein belongs to the archease family.

Functionally, activates the tRNA-splicing ligase complex by facilitating the enzymatic turnover of catalytic subunit RtcB. Acts by promoting the guanylylation of RtcB, a key intermediate step in tRNA ligation. Can also alter the NTP specificity of RtcB such that ATP, dGTP or ITP is used efficiently. This chain is Protein archease, found in Pyrobaculum neutrophilum (strain DSM 2338 / JCM 9278 / NBRC 100436 / V24Sta) (Thermoproteus neutrophilus).